Reading from the N-terminus, the 72-residue chain is MTKEDSFEMHGTVLDTLPNTMFRVKLENGHVIVAHISGKIRKNYIRILTGDKVTVELTPYDLSKGRIIFRSR.

An S1-like domain is found at 1–72 (MTKEDSFEMH…SKGRIIFRSR (72 aa)).

It belongs to the IF-1 family. In terms of assembly, component of the 30S ribosomal translation pre-initiation complex which assembles on the 30S ribosome in the order IF-2 and IF-3, IF-1 and N-formylmethionyl-tRNA(fMet); mRNA recruitment can occur at any time during PIC assembly.

It localises to the cytoplasm. Its function is as follows. One of the essential components for the initiation of protein synthesis. Stabilizes the binding of IF-2 and IF-3 on the 30S subunit to which N-formylmethionyl-tRNA(fMet) subsequently binds. Helps modulate mRNA selection, yielding the 30S pre-initiation complex (PIC). Upon addition of the 50S ribosomal subunit IF-1, IF-2 and IF-3 are released leaving the mature 70S translation initiation complex. This Blochmanniella pennsylvanica (strain BPEN) protein is Translation initiation factor IF-1.